Consider the following 72-residue polypeptide: uncharacterized protein (72 aa).

This is an uncharacterized protein from Homo sapiens (Human).